Here is a 421-residue protein sequence, read N- to C-terminus: Testin (421 aa).

Residues 92 to 199 enclose the PET domain; that stretch reads MILTNPVAAK…GDVKLPQEMD (108 aa). LIM zinc-binding domains are found at residues 234 to 297, 299 to 359, and 362 to 421; these read YSCY…CDSE, PRCA…NHAV, and QGCH…KMMS.

It belongs to the prickle / espinas / testin family. Interacts via LIM domain 1 with ZYX. Interacts (via LIM domain 3) with ENAH and VASP. Interacts with ALKBH4, talin, actin, alpha-actinin, GRIP1 and PXN. Interacts (via LIM domain 2) with ACTL7A (via N-terminus). Heterodimer with ACTL7A; the heterodimer interacts with ENAH to form a heterotrimer.

Its subcellular location is the cytoplasm. It localises to the cell junction. The protein resides in the focal adhesion. In terms of biological role, scaffold protein that may play a role in cell adhesion, cell spreading and in the reorganization of the actin cytoskeleton. Plays a role in the regulation of cell proliferation. May act as a tumor suppressor. The sequence is that of Testin (TES) from Loxodonta africana (African elephant).